The chain runs to 305 residues: UDP-3-O-acyl-N-acetylglucosamine deacetylase (305 aa).

His-77, His-234, and Asp-238 together coordinate Zn(2+). His-261 (proton donor) is an active-site residue.

It belongs to the LpxC family. The cofactor is Zn(2+).

It catalyses the reaction a UDP-3-O-[(3R)-3-hydroxyacyl]-N-acetyl-alpha-D-glucosamine + H2O = a UDP-3-O-[(3R)-3-hydroxyacyl]-alpha-D-glucosamine + acetate. The protein operates within glycolipid biosynthesis; lipid IV(A) biosynthesis; lipid IV(A) from (3R)-3-hydroxytetradecanoyl-[acyl-carrier-protein] and UDP-N-acetyl-alpha-D-glucosamine: step 2/6. In terms of biological role, catalyzes the hydrolysis of UDP-3-O-myristoyl-N-acetylglucosamine to form UDP-3-O-myristoylglucosamine and acetate, the committed step in lipid A biosynthesis. This Oleidesulfovibrio alaskensis (strain ATCC BAA-1058 / DSM 17464 / G20) (Desulfovibrio alaskensis) protein is UDP-3-O-acyl-N-acetylglucosamine deacetylase.